A 498-amino-acid chain; its full sequence is GTPase Der (498 aa).

EngA-type G domains are found at residues 3-167 (PVVA…FDDL) and 210-383 (IKLA…KSAT). Residues 9–16 (GRPNVGKS), 57–61 (DTGGI), 119–122 (NKID), 216–223 (GRPNVGKS), 263–267 (DTAGV), and 328–331 (NKWD) contribute to the GTP site. Positions 384–468 (TRVGTSVLTR…PIRINFQNSE (85 aa)) constitute a KH-like domain.

It belongs to the TRAFAC class TrmE-Era-EngA-EngB-Septin-like GTPase superfamily. EngA (Der) GTPase family. As to quaternary structure, associates with the 50S ribosomal subunit.

In terms of biological role, GTPase that plays an essential role in the late steps of ribosome biogenesis. This chain is GTPase Der, found in Vibrio parahaemolyticus serotype O3:K6 (strain RIMD 2210633).